Here is a 288-residue protein sequence, read N- to C-terminus: DegV domain-containing protein DR_1903 (288 aa).

A DegV domain is found at 2–280; the sequence is IAVTTESTAD…PGVVAVLAFP (279 aa). Residues Thr-59 and Thr-93 each coordinate hexadecanoate.

May bind long-chain fatty acids, such as palmitate, and may play a role in lipid transport or fatty acid metabolism. The chain is DegV domain-containing protein DR_1903 from Deinococcus radiodurans (strain ATCC 13939 / DSM 20539 / JCM 16871 / CCUG 27074 / LMG 4051 / NBRC 15346 / NCIMB 9279 / VKM B-1422 / R1).